The primary structure comprises 242 residues: Urease accessory protein UreF (242 aa).

It belongs to the UreF family. As to quaternary structure, ureD, UreF and UreG form a complex that acts as a GTP-hydrolysis-dependent molecular chaperone, activating the urease apoprotein by helping to assemble the nickel containing metallocenter of UreC. The UreE protein probably delivers the nickel.

It localises to the cytoplasm. In terms of biological role, required for maturation of urease via the functional incorporation of the urease nickel metallocenter. This Bradyrhizobium diazoefficiens (strain JCM 10833 / BCRC 13528 / IAM 13628 / NBRC 14792 / USDA 110) protein is Urease accessory protein UreF.